Reading from the N-terminus, the 111-residue chain is Large ribosomal subunit protein uL22 (111 aa).

It belongs to the universal ribosomal protein uL22 family. Part of the 50S ribosomal subunit.

Its function is as follows. This protein binds specifically to 23S rRNA; its binding is stimulated by other ribosomal proteins, e.g. L4, L17, and L20. It is important during the early stages of 50S assembly. It makes multiple contacts with different domains of the 23S rRNA in the assembled 50S subunit and ribosome. Functionally, the globular domain of the protein is located near the polypeptide exit tunnel on the outside of the subunit, while an extended beta-hairpin is found that lines the wall of the exit tunnel in the center of the 70S ribosome. This Stenotrophomonas maltophilia (strain R551-3) protein is Large ribosomal subunit protein uL22.